Reading from the N-terminus, the 415-residue chain is Gamma-glutamyl phosphate reductase (415 aa).

It belongs to the gamma-glutamyl phosphate reductase family.

The protein localises to the cytoplasm. It catalyses the reaction L-glutamate 5-semialdehyde + phosphate + NADP(+) = L-glutamyl 5-phosphate + NADPH + H(+). The protein operates within amino-acid biosynthesis; L-proline biosynthesis; L-glutamate 5-semialdehyde from L-glutamate: step 2/2. In terms of biological role, catalyzes the NADPH-dependent reduction of L-glutamate 5-phosphate into L-glutamate 5-semialdehyde and phosphate. The product spontaneously undergoes cyclization to form 1-pyrroline-5-carboxylate. The protein is Gamma-glutamyl phosphate reductase of Listeria monocytogenes serovar 1/2a (strain ATCC BAA-679 / EGD-e).